The chain runs to 428 residues: Autophagy-related protein 14 (428 aa).

A coiled-coil region spans residues 82-143 (QEAIDRTAEI…RKKQLDKVKD (62 aa)).

This sequence belongs to the ATG14 family. Component of the autophagy-specific VPS34 PI3-kinase complex I.

It is found in the preautophagosomal structure membrane. The protein localises to the vacuole membrane. In terms of biological role, required for cytoplasm to vacuole transport (Cvt) and autophagy as a part of the autophagy-specific VPS34 PI3-kinase complex I. This complex is essential to recruit the ATG8-phosphatidylinositol conjugate and the ATG12-ATG5 conjugate to the pre-autophagosomal structure. ATG14 mediates the specific binding of the VPS34 PI3-kinase complex I to the preautophagosomal structure (PAS). Plays a crucial role in hyphal development, conidiogenesis and pathogenicity. Also required for glycogen mobilization, quantity of lipid bodies, and the turgor pressure of appressoria. In Pyricularia oryzae (strain 70-15 / ATCC MYA-4617 / FGSC 8958) (Rice blast fungus), this protein is Autophagy-related protein 14.